Here is a 253-residue protein sequence, read N- to C-terminus: Tryptophan synthase alpha chain (253 aa).

Active-site proton acceptor residues include glutamate 47 and aspartate 58.

This sequence belongs to the TrpA family. As to quaternary structure, tetramer of two alpha and two beta chains.

It catalyses the reaction (1S,2R)-1-C-(indol-3-yl)glycerol 3-phosphate + L-serine = D-glyceraldehyde 3-phosphate + L-tryptophan + H2O. It participates in amino-acid biosynthesis; L-tryptophan biosynthesis; L-tryptophan from chorismate: step 5/5. Its function is as follows. The alpha subunit is responsible for the aldol cleavage of indoleglycerol phosphate to indole and glyceraldehyde 3-phosphate. In Desulforapulum autotrophicum (strain ATCC 43914 / DSM 3382 / VKM B-1955 / HRM2) (Desulfobacterium autotrophicum), this protein is Tryptophan synthase alpha chain.